We begin with the raw amino-acid sequence, 264 residues long: Undecaprenyl-diphosphatase (264 aa).

8 helical membrane-spanning segments follow: residues 7 to 27 (IVLA…SAHL), 41 to 61 (LIFD…YYQA), 89 to 109 (VLLG…FVAV), 114 to 134 (IEII…ASWF), 144 to 164 (TISW…LIPG), 186 to 206 (IQFS…LMLI), 219 to 239 (LLVL…IFVI), and 244 to 264 (MVGM…LFFL).

It belongs to the UppP family.

It is found in the cell inner membrane. It catalyses the reaction di-trans,octa-cis-undecaprenyl diphosphate + H2O = di-trans,octa-cis-undecaprenyl phosphate + phosphate + H(+). Catalyzes the dephosphorylation of undecaprenyl diphosphate (UPP). Confers resistance to bacitracin. The chain is Undecaprenyl-diphosphatase from Vesicomyosocius okutanii subsp. Calyptogena okutanii (strain HA).